The sequence spans 159 residues: Ribonuclease H (159 aa).

One can recognise an RNase H type-1 domain in the interval 8–150; it reads NLKEITMYTD…CDQLAVAAAK (143 aa). Mg(2+) contacts are provided by Asp17, Glu55, Asp77, and Asp142.

The protein belongs to the RNase H family. In terms of assembly, monomer. Mg(2+) is required as a cofactor.

Its subcellular location is the cytoplasm. It carries out the reaction Endonucleolytic cleavage to 5'-phosphomonoester.. Its function is as follows. Endonuclease that specifically degrades the RNA of RNA-DNA hybrids. This Desulforamulus reducens (strain ATCC BAA-1160 / DSM 100696 / MI-1) (Desulfotomaculum reducens) protein is Ribonuclease H.